The chain runs to 34 residues: MFNWNIVAQLLSLALVTLSGPAVIFLLYFKRGNL.

Residues 6–26 form a helical membrane-spanning segment; it reads IVAQLLSLALVTLSGPAVIFL.

It belongs to the Psb30/Ycf12 family. PSII is composed of 1 copy each of membrane proteins PsbA, PsbB, PsbC, PsbD, PsbE, PsbF, PsbH, PsbI, PsbJ, PsbK, PsbL, PsbM, PsbT, PsbX, PsbY, PsbZ, Psb30/Ycf12, peripheral proteins of the oxygen-evolving complex and a large number of cofactors. It forms dimeric complexes.

Its subcellular location is the plastid. The protein localises to the chloroplast thylakoid membrane. A core subunit of photosystem II (PSII), probably helps stabilize the reaction center. The sequence is that of Photosystem II reaction center protein Psb30 from Emiliania huxleyi (Coccolithophore).